We begin with the raw amino-acid sequence, 203 residues long: Vexin (203 aa).

Positions 59-70 are enriched in basic and acidic residues; sequence HRTDRRDGEGRW. The disordered stretch occupies residues 59 to 101; it reads HRTDRRDGEGRWSGRFQNPRLQGPHPAKTPARPVGTSEPKSAN.

The protein belongs to the vexin family.

The protein localises to the cell membrane. It localises to the nucleus. Functionally, required for neurogenesis in the neural plate and retina. Strongly cooperates with neural bHLH factors to promote neurogenesis. The chain is Vexin from Bos taurus (Bovine).